An 839-amino-acid chain; its full sequence is DNA-directed RNA polymerase YonO (839 aa).

Mg(2+) is bound by residues D535, D537, and D539.

Belongs to the YRH RNA polymerase family. A divalent metal cation serves as cofactor.

It carries out the reaction RNA(n) + a ribonucleoside 5'-triphosphate = RNA(n+1) + diphosphate. In terms of biological role, a single subunit DNA-dependent RNA polymerase (RNAP) that catalyzes the transcription of DNA into RNA using the four ribonucleoside triphosphates (rNTPs) as substrates. The enzyme is more highly processive than the multisubunit RNAP from E.coli but is considerably more error-prone. It has no detectable proof-reading function but can perform pyrophosphorolysis. Probably transcribes the late genes of the SPbeta phage starting from yonK. This Bacillus pumilus (Bacillus mesentericus) protein is DNA-directed RNA polymerase YonO (yonO).